A 420-amino-acid chain; its full sequence is Phosphatidylinositol 5-phosphate 4-kinase type-2 gamma (420 aa).

Alanine 2 is subject to N-acetylalanine. The residue at position 26 (serine 26) is a Phosphoserine. Positions 43–419 constitute a PIPK domain; that stretch reads AADPLVGVFL…RFLDFISNIF (377 aa). The required for interaction with PIP5K1A stretch occupies residues 69-75; it reads VMLLPDD. At serine 349 the chain carries Phosphoserine.

Interacts with PIP5K1A; the interaction inhibits PIP5K1A kinase activity. Post-translationally, phosphorylated, phosphorylation is induced by EGF. Widely expressed, with the most abundant expression in kidney.

Its subcellular location is the endoplasmic reticulum. It localises to the cytoplasm. The enzyme catalyses a 1,2-diacyl-sn-glycero-3-phospho-(1D-myo-inositol-5-phosphate) + ATP = a 1,2-diacyl-sn-glycero-3-phospho-(1D-myo-inositol-4,5-bisphosphate) + ADP + H(+). It catalyses the reaction 1,2-dihexadecanoyl-sn-glycero-3-phospho-(1D-myo-inositol-5-phosphate) + ATP = 1,2-dihexadecanoyl-sn-glycero-3-phospho-(1D-myo-inositol-4,5-bisphosphate) + ADP + H(+). It carries out the reaction 1,2-dihexadecanoyl-sn-glycero-3-phospho-(1D-myo-inositol-5-phosphate) + GTP = 1,2-dihexadecanoyl-sn-glycero-3-phospho-(1D-myo-inositol-4,5-bisphosphate) + GDP + H(+). Functionally, phosphatidylinositol 5-phosphate 4-kinase with low enzymatic activity. May be a GTP sensor, has higher GTP-dependent kinase activity than ATP-dependent kinase activity. PIP4Ks negatively regulate insulin signaling through a catalytic-independent mechanism. They interact with PIP5Ks and suppress PIP5K-mediated PtdIns(4,5)P2 synthesis and insulin-dependent conversion to PtdIns(3,4,5)P3. This chain is Phosphatidylinositol 5-phosphate 4-kinase type-2 gamma, found in Rattus norvegicus (Rat).